The primary structure comprises 947 residues: Protein NLP8 (947 aa).

Disordered stretches follow at residues 114-135 (RSSA…ELSG), 509-533 (STKK…TTSS), and 550-591 (SMFS…EKNV). Positions 126-135 (RSSDSDELSG) are enriched in basic and acidic residues. Composition is skewed to polar residues over residues 522–533 (SDMSNFPQTTSS) and 550–572 (SMFS…TLEQ). The span at 573–587 (DVSKARTPEKKKSTT) shows a compositional bias: basic and acidic residues. The region spanning 577–671 (ARTPEKKKST…LDSVQGVEGG (95 aa)) is the RWP-RK domain. The stretch at 646–666 (RKINKVNRSLRKIQTVLDSVQ) forms a coiled coil. Low complexity predominate over residues 805 to 815 (SCSISDSSNGS). The interval 805–828 (SCSISDSSNGSGAVLRGSSSTSME) is disordered. In terms of domain architecture, PB1 spans 847–929 (TLIVKASYRE…HSVKFLVRDL (83 aa)).

The protein localises to the nucleus. Probable transcription factor. The sequence is that of Protein NLP8 (NLP8) from Arabidopsis thaliana (Mouse-ear cress).